Reading from the N-terminus, the 170-residue chain is Ureidoglycolate lyase (170 aa).

The protein belongs to the ureidoglycolate lyase family. As to quaternary structure, homodimer. The cofactor is Ni(2+).

It carries out the reaction (S)-ureidoglycolate = urea + glyoxylate. It functions in the pathway nitrogen metabolism; (S)-allantoin degradation. Its function is as follows. Catalyzes the catabolism of the allantoin degradation intermediate (S)-ureidoglycolate, generating urea and glyoxylate. Involved in the utilization of allantoin as nitrogen source. In Pseudomonas syringae pv. syringae (strain B728a), this protein is Ureidoglycolate lyase.